A 447-amino-acid chain; its full sequence is Argininosuccinate synthase (447 aa).

ATP contacts are provided by residues Ala-17–Ser-25 and Ala-43. L-citrulline is bound at residue Tyr-99. 2 residues coordinate ATP: Gly-129 and Thr-131. Residues Thr-131, Asn-135, and Asp-136 each coordinate L-aspartate. Asn-135 serves as a coordination point for L-citrulline. Asp-136 provides a ligand contact to ATP. Arg-139 and Ser-192 together coordinate L-citrulline. Asp-194 lines the ATP pocket. L-citrulline-binding residues include Thr-201, Glu-203, and Glu-280.

It belongs to the argininosuccinate synthase family. Type 2 subfamily. As to quaternary structure, homotetramer.

The protein resides in the cytoplasm. It catalyses the reaction L-citrulline + L-aspartate + ATP = 2-(N(omega)-L-arginino)succinate + AMP + diphosphate + H(+). The protein operates within amino-acid biosynthesis; L-arginine biosynthesis; L-arginine from L-ornithine and carbamoyl phosphate: step 2/3. The sequence is that of Argininosuccinate synthase from Klebsiella pneumoniae subsp. pneumoniae (strain ATCC 700721 / MGH 78578).